The primary structure comprises 697 residues: Polyribonucleotide nucleotidyltransferase (697 aa).

The Mg(2+) site is built by D487 and D493. Residues P554–I613 form the KH domain. Positions G623–K691 constitute an S1 motif domain.

It belongs to the polyribonucleotide nucleotidyltransferase family. Mg(2+) is required as a cofactor.

It is found in the cytoplasm. The catalysed reaction is RNA(n+1) + phosphate = RNA(n) + a ribonucleoside 5'-diphosphate. Functionally, involved in mRNA degradation. Catalyzes the phosphorolysis of single-stranded polyribonucleotides processively in the 3'- to 5'-direction. This is Polyribonucleotide nucleotidyltransferase from Protochlamydia amoebophila (strain UWE25).